We begin with the raw amino-acid sequence, 503 residues long: Guanosine-5'-triphosphate,3'-diphosphate pyrophosphatase (503 aa).

This sequence belongs to the GppA/Ppx family. GppA subfamily.

It catalyses the reaction guanosine 3'-diphosphate 5'-triphosphate + H2O = guanosine 3',5'-bis(diphosphate) + phosphate + H(+). The protein operates within purine metabolism; ppGpp biosynthesis; ppGpp from GTP: step 2/2. Its function is as follows. Catalyzes the conversion of pppGpp to ppGpp. Guanosine pentaphosphate (pppGpp) is a cytoplasmic signaling molecule which together with ppGpp controls the 'stringent response', an adaptive process that allows bacteria to respond to amino acid starvation, resulting in the coordinated regulation of numerous cellular activities. This is Guanosine-5'-triphosphate,3'-diphosphate pyrophosphatase from Pseudoalteromonas atlantica (strain T6c / ATCC BAA-1087).